The following is a 249-amino-acid chain: Flagellar brake protein YcgR (249 aa).

In terms of domain architecture, PilZ spans 117–236 (QRREFFRVDA…ERELQQVIFS (120 aa)).

Belongs to the YcgR family. As to quaternary structure, monomer. Interacts with the flagellar basal bodies.

The protein localises to the bacterial flagellum basal body. In terms of biological role, acts as a flagellar brake, regulating swimming and swarming in a bis-(3'-5') cyclic diguanylic acid (c-di-GMP)-dependent manner. Binds 1 c-di-GMP dimer per subunit. Increasing levels of c-di-GMP lead to decreased motility. The chain is Flagellar brake protein YcgR from Erwinia tasmaniensis (strain DSM 17950 / CFBP 7177 / CIP 109463 / NCPPB 4357 / Et1/99).